Consider the following 235-residue polypeptide: Phosphoribosylaminoimidazole-succinocarboxamide synthase (235 aa).

It belongs to the SAICAR synthetase family.

It catalyses the reaction 5-amino-1-(5-phospho-D-ribosyl)imidazole-4-carboxylate + L-aspartate + ATP = (2S)-2-[5-amino-1-(5-phospho-beta-D-ribosyl)imidazole-4-carboxamido]succinate + ADP + phosphate + 2 H(+). It functions in the pathway purine metabolism; IMP biosynthesis via de novo pathway; 5-amino-1-(5-phospho-D-ribosyl)imidazole-4-carboxamide from 5-amino-1-(5-phospho-D-ribosyl)imidazole-4-carboxylate: step 1/2. This chain is Phosphoribosylaminoimidazole-succinocarboxamide synthase, found in Exiguobacterium sibiricum (strain DSM 17290 / CCUG 55495 / CIP 109462 / JCM 13490 / 255-15).